Here is a 141-residue protein sequence, read N- to C-terminus: Cystatin-SA (141 aa).

The first 20 residues, 1–20, serve as a signal peptide directing secretion; it reads MAWPLCTLLLLLATQAVALA. The Secondary area of contact signature appears at 76–80; the sequence is QIVGG. 2 disulfide bridges follow: Cys94/Cys104 and Cys118/Cys138.

Expressed in submandibular and sublingual saliva but not in parotid saliva (at protein level). Expressed in submandibular gland and parotid gland.

Its subcellular location is the secreted. In terms of biological role, thiol protease inhibitor. This chain is Cystatin-SA (CST2), found in Homo sapiens (Human).